The chain runs to 439 residues: MIRGSSALKSLTSRRLYSTGVKYTTLSNGVTVATETNPAAKTSSVGLFFGAGSRSEHSHSNGISALTTNVLASQSAKGSLLTAKNDREFNGIIAQTTNDNITEAGKLIASIASNAVDIVEKTDLTKHKQYLSAQASAVEADPKSKVLSHLYSSAFQGYSLALPTLGTTESVENLENQDSLRHLAKHLVNNNTVIAASGNFDHDKLADAIEANLKIAEGVKPEIKPASFLGSEVRMRDDTLPKAYISIAVHGEGLNSPNYYLAKVAAAIYGDFYLHSTIAKFTSPKLASIVQEYNIVESYNHYSKSFSDTGIWGYYAEIADKFTVDDFTHFSLKEWNRLSISISEAEVARAKAQVKTALAKELANSFAVTSDIAEKVLLVGHRQSLREAFEKIDAIKVNDVKEWGKSKVWDRDIVISGTGLIEDLLDYNRNRNEMAMMRW.

The N-terminal 17 residues, 1-17 (MIRGSSALKSLTSRRLY), are a transit peptide targeting the mitochondrion.

This sequence belongs to the peptidase M16 family. UQCRC1/QCR1 subfamily. In terms of assembly, component of the ubiquinol-cytochrome c oxidoreductase (cytochrome b-c1 complex, complex III, CIII), a multisubunit enzyme composed of 10 subunits. The complex is composed of 3 respiratory subunits cytochrome b (COB), cytochrome c1 (CYT1) and Rieske protein (RIP1), 2 core protein subunits COR1 and QCR2, and 5 low-molecular weight protein subunits QCR6, QCR7, QCR8, QCR9 and QCR10. The complex exists as an obligatory dimer and forms supercomplexes (SCs) in the inner mitochondrial membrane with a monomer or a dimer of cytochrome c oxidase (complex IV, CIV), resulting in 2 different assemblies (supercomplexes III(2)IV and III(2)IV(2)).

The protein localises to the mitochondrion inner membrane. Component of the ubiquinol-cytochrome c oxidoreductase, a multisubunit transmembrane complex that is part of the mitochondrial electron transport chain which drives oxidative phosphorylation. The complex plays an important role in the uptake of multiple carbon sources present in different host niches. This Candida albicans (strain SC5314 / ATCC MYA-2876) (Yeast) protein is Cytochrome b-c1 complex reductase subunit, mitochondrial.